The following is a 360-amino-acid chain: Secreted LysM effector LysM2 (360 aa).

Residues Met-1–Gly-21 form the signal peptide. In terms of domain architecture, LysM 1 spans Thr-37 to Val-85. The span at Ala-94–Ala-113 shows a compositional bias: low complexity. The tract at residues Ala-94–Gly-125 is disordered. An N-linked (GlcNAc...) asparagine glycan is attached at Asn-129. Residues Lys-132 to Val-179 form the LysM 2 domain. A glycan (N-linked (GlcNAc...) asparagine) is linked at Asn-204. LysM domains follow at residues Arg-225–Ile-272 and Lys-311–Val-357.

The protein belongs to the secreted LysM effector family.

The protein resides in the secreted. It localises to the cell wall. Functionally, secreted effector that binds two substrates, chitin and N-linked oligosaccharides associated with human skin glycoproteins. Could provide the pathogen with three important functions including shielding host cell wall chitin from the human immune system, shielding the pathogen's glycoproteins from host degradation and immune surveillance, and helping facilitate pathogen adhesion to human skin. The polypeptide is Secreted LysM effector LysM2 (Trichophyton rubrum (strain ATCC MYA-4607 / CBS 118892) (Athlete's foot fungus)).